Consider the following 83-residue polypeptide: Sec-independent protein translocase protein TatA (83 aa).

Residues 1–21 form a helical membrane-spanning segment; it reads MGSFSIWHWLIVLLIVVMVFG. Positions 44–83 are disordered; that stretch reads KDGGQSAAATDDKPAAPAGQVTNAQASDKTTIDVEARQKS. Residues 63-72 are compositionally biased toward polar residues; the sequence is QVTNAQASDK. Basic and acidic residues predominate over residues 73–83; sequence TTIDVEARQKS.

The protein belongs to the TatA/E family. As to quaternary structure, the Tat system comprises two distinct complexes: a TatABC complex, containing multiple copies of TatA, TatB and TatC subunits, and a separate TatA complex, containing only TatA subunits. Substrates initially bind to the TatABC complex, which probably triggers association of the separate TatA complex to form the active translocon.

It is found in the cell inner membrane. In terms of biological role, part of the twin-arginine translocation (Tat) system that transports large folded proteins containing a characteristic twin-arginine motif in their signal peptide across membranes. TatA could form the protein-conducting channel of the Tat system. The protein is Sec-independent protein translocase protein TatA of Polaromonas sp. (strain JS666 / ATCC BAA-500).